The primary structure comprises 955 residues: UvrABC system protein A (955 aa).

An ATP-binding site is contributed by 35-42; the sequence is GLSGSGKS. ABC transporter domains follow at residues 322–601 and 621–951; these read WGST…EESI and GHDN…RYLK. Residue 654–661 participates in ATP binding; it reads GVSGSGKS. A C4-type zinc finger spans residues 754 to 780; that stretch reads CEACQGDGLIKIEMHFLPDVYVKCDIC.

It belongs to the ABC transporter superfamily. UvrA family. Forms a heterotetramer with UvrB during the search for lesions.

The protein resides in the cytoplasm. Its function is as follows. The UvrABC repair system catalyzes the recognition and processing of DNA lesions. UvrA is an ATPase and a DNA-binding protein. A damage recognition complex composed of 2 UvrA and 2 UvrB subunits scans DNA for abnormalities. When the presence of a lesion has been verified by UvrB, the UvrA molecules dissociate. This chain is UvrABC system protein A, found in Rickettsia felis (strain ATCC VR-1525 / URRWXCal2) (Rickettsia azadi).